The chain runs to 215 residues: Probable phosphoglycerate mutase GpmB (215 aa).

Substrate is bound by residues 8 to 15, 21 to 22, arginine 58, 82 to 85, 104 to 105, and 151 to 152; these read RHGETQWN, QG, ELDM, RR, and GI. The active-site Tele-phosphohistidine intermediate is the histidine 9. Glutamate 82 (proton donor/acceptor) is an active-site residue.

This sequence belongs to the phosphoglycerate mutase family. GpmB subfamily.

It carries out the reaction (2R)-2-phosphoglycerate = (2R)-3-phosphoglycerate. It participates in carbohydrate degradation; glycolysis; pyruvate from D-glyceraldehyde 3-phosphate: step 3/5. The protein is Probable phosphoglycerate mutase GpmB of Enterobacter sp. (strain 638).